A 356-amino-acid polypeptide reads, in one-letter code: S-adenosylmethionine:tRNA ribosyltransferase-isomerase (356 aa).

This sequence belongs to the QueA family. Monomer.

It is found in the cytoplasm. It catalyses the reaction 7-aminomethyl-7-carbaguanosine(34) in tRNA + S-adenosyl-L-methionine = epoxyqueuosine(34) in tRNA + adenine + L-methionine + 2 H(+). It participates in tRNA modification; tRNA-queuosine biosynthesis. Its function is as follows. Transfers and isomerizes the ribose moiety from AdoMet to the 7-aminomethyl group of 7-deazaguanine (preQ1-tRNA) to give epoxyqueuosine (oQ-tRNA). This Escherichia coli (strain ATCC 8739 / DSM 1576 / NBRC 3972 / NCIMB 8545 / WDCM 00012 / Crooks) protein is S-adenosylmethionine:tRNA ribosyltransferase-isomerase.